A 242-amino-acid polypeptide reads, in one-letter code: Ribonuclease 3 2 (242 aa).

In terms of domain architecture, RNase III spans 12 to 137 (LESLVRKLGL…VLGALYLSTS (126 aa)). Glu-51 provides a ligand contact to Mg(2+). The active site involves Asp-55. Residues Asp-123 and Glu-126 each contribute to the Mg(2+) site. Residue Glu-126 is part of the active site. The DRBM domain maps to 165–235 (NYKAALQEWT…AKVAFLAITP (71 aa)).

This sequence belongs to the ribonuclease III family. In terms of assembly, homodimer. Mg(2+) serves as cofactor.

The protein resides in the cytoplasm. The enzyme catalyses Endonucleolytic cleavage to 5'-phosphomonoester.. In terms of biological role, digests double-stranded RNA. Involved in the processing of primary rRNA transcript to yield the immediate precursors to the large and small rRNAs (23S and 16S). Processes some mRNAs, and tRNAs when they are encoded in the rRNA operon. Processes pre-crRNA and tracrRNA of type II CRISPR loci if present in the organism. This is Ribonuclease 3 2 (rnc2) from Nostoc sp. (strain PCC 7120 / SAG 25.82 / UTEX 2576).